The chain runs to 96 residues: Progonadoliberin-1 (96 aa).

Positions 1–26 (MHRKMAVKTLSVWLLLVGTLVPQHCC) are cleaved as a signal peptide. Q27 carries the post-translational modification Pyrrolidone carboxylic acid. G36 bears the Glycine amide mark.

It belongs to the GnRH family. As to expression, preoptic area of the brain.

The protein resides in the secreted. Stimulates the secretion of gonadotropins. The protein is Progonadoliberin-1 (gnrh1) of Verasper moseri (Barfin flounder).